The following is a 329-amino-acid chain: Ribosomal RNA small subunit methyltransferase H (329 aa).

Residues 39–41 (GGY), D57, F84, D100, and Q107 contribute to the S-adenosyl-L-methionine site. The segment at 285–305 (GPDKDELAQNPRSRSALLRVG) is disordered.

This sequence belongs to the methyltransferase superfamily. RsmH family.

Its subcellular location is the cytoplasm. The catalysed reaction is cytidine(1402) in 16S rRNA + S-adenosyl-L-methionine = N(4)-methylcytidine(1402) in 16S rRNA + S-adenosyl-L-homocysteine + H(+). In terms of biological role, specifically methylates the N4 position of cytidine in position 1402 (C1402) of 16S rRNA. The protein is Ribosomal RNA small subunit methyltransferase H of Ruegeria sp. (strain TM1040) (Silicibacter sp.).